We begin with the raw amino-acid sequence, 153 residues long: Superoxide dismutase [Cu-Zn] (153 aa).

3 residues coordinate Cu cation: histidine 46, histidine 48, and histidine 63. Cysteine 57 and cysteine 146 are joined by a disulfide. Residues 61–80 are disordered; that stretch reads GPHFNPFGKEHGAPEDENRH. Zn(2+) is bound by residues histidine 63, histidine 71, histidine 80, and aspartate 83. A compositionally biased stretch (basic and acidic residues) spans 68 to 80; sequence GKEHGAPEDENRH. Histidine 120 is a Cu cation binding site. Over residues 124-136 the composition is skewed to basic and acidic residues; that stretch reads DDLGRSEHPESKK. The disordered stretch occupies residues 124-143; the sequence is DDLGRSEHPESKKTGNAGAR. Arginine 143 is a binding site for substrate.

This sequence belongs to the Cu-Zn superoxide dismutase family. Homodimer. The cofactor is Cu cation. Zn(2+) serves as cofactor.

Its subcellular location is the cytoplasm. The catalysed reaction is 2 superoxide + 2 H(+) = H2O2 + O2. Destroys radicals which are normally produced within the cells and which are toxic to biological systems. This chain is Superoxide dismutase [Cu-Zn] (sodC), found in Aspergillus flavus.